The following is a 463-amino-acid chain: FAD-dependent monooxygenase ausM (463 aa).

Residues Glu-40, Gly-54, and Arg-113 each coordinate FAD. Residue Tyr-217 is part of the active site. FAD contacts are provided by Asp-309 and Ala-322. The chain crosses the membrane as a helical span at residues Val-443–Ala-463.

Belongs to the paxM FAD-dependent monooxygenase family. FAD serves as cofactor.

The protein resides in the membrane. It functions in the pathway secondary metabolite biosynthesis; terpenoid biosynthesis. In terms of biological role, FAD-dependent monooxygenase; part of the gene cluster that mediates the biosynthesis of calidodehydroaustin, a fungal meroterpenoid. The first step of the pathway is the synthesis of 3,5-dimethylorsellinic acid by the polyketide synthase ausA. 3,5-dimethylorsellinic acid is then prenylated by the polyprenyl transferase ausN. Further epoxidation by the FAD-dependent monooxygenase ausM and cyclization by the probable terpene cyclase ausL lead to the formation of protoaustinoid A. Protoaustinoid A is then oxidized to spiro-lactone preaustinoid A3 by the combined action of the FAD-binding monooxygenases ausB and ausC, and the dioxygenase ausE. Acid-catalyzed keto-rearrangement and ring contraction of the tetraketide portion of preaustinoid A3 by ausJ lead to the formation of preaustinoid A4. The aldo-keto reductase ausK, with the help of ausH, is involved in the next step by transforming preaustinoid A4 into isoaustinone which is in turn hydroxylated by the P450 monooxygenase ausI to form austinolide. The cytochrome P450 monooxygenase ausG modifies austinolide to austinol. Austinol is further acetylated to austin by the O-acetyltransferase ausP, which spontaneously changes to dehydroaustin. The cytochrome P450 monooxygenase ausR then converts dehydroaustin is into 7-dehydrodehydroaustin. The hydroxylation catalyzed by ausR permits the O-acetyltransferase ausQ to add an additional acetyl group to the molecule, leading to the formation of acetoxydehydroaustin. The short chain dehydrogenase ausT catalyzes the reduction of the double bond present between carbon atoms 1 and 2 to convert 7-dehydrodehydroaustin into 1,2-dihydro-7-hydroxydehydroaustin. AusQ catalyzes not only an acetylation reaction but also the addition of the PKS ausV diketide product to 1,2-dihydro-7-hydroxydehydroaustin, forming precalidodehydroaustin. Finally, the iron/alpha-ketoglutarate-dependent dioxygenase converts precalidodehydroaustin into calidodehydroaustin. The sequence is that of FAD-dependent monooxygenase ausM from Aspergillus calidoustus.